The sequence spans 215 residues: UPF0173 metal-dependent hydrolase NEQ378 (215 aa).

This sequence belongs to the UPF0173 family.

The protein is UPF0173 metal-dependent hydrolase NEQ378 of Nanoarchaeum equitans (strain Kin4-M).